The following is a 263-amino-acid chain: Ribosomal RNA small subunit methyltransferase J (263 aa).

S-adenosyl-L-methionine contacts are provided by residues 108–109 (RD), 124–125 (ER), and D178.

Belongs to the methyltransferase superfamily. RsmJ family.

The protein localises to the cytoplasm. It catalyses the reaction guanosine(1516) in 16S rRNA + S-adenosyl-L-methionine = N(2)-methylguanosine(1516) in 16S rRNA + S-adenosyl-L-homocysteine + H(+). Functionally, specifically methylates the guanosine in position 1516 of 16S rRNA. This chain is Ribosomal RNA small subunit methyltransferase J, found in Idiomarina loihiensis (strain ATCC BAA-735 / DSM 15497 / L2-TR).